The sequence spans 396 residues: S-adenosylmethionine synthase (396 aa).

Residue histidine 16 coordinates ATP. Aspartate 18 provides a ligand contact to Mg(2+). A K(+)-binding site is contributed by glutamate 44. The L-methionine site is built by glutamate 57 and glutamine 100. Residues 100–110 (QSPDIAQGVDR) form a flexible loop region. ATP-binding positions include 167–169 (DAK), 232–233 (RF), aspartate 241, 247–248 (RK), alanine 264, and lysine 268. Residue aspartate 241 participates in L-methionine binding. Position 272 (lysine 272) interacts with L-methionine.

It belongs to the AdoMet synthase family. As to quaternary structure, homotetramer; dimer of dimers. Requires Mg(2+) as cofactor. K(+) is required as a cofactor.

It localises to the cytoplasm. The catalysed reaction is L-methionine + ATP + H2O = S-adenosyl-L-methionine + phosphate + diphosphate. Its pathway is amino-acid biosynthesis; S-adenosyl-L-methionine biosynthesis; S-adenosyl-L-methionine from L-methionine: step 1/1. Catalyzes the formation of S-adenosylmethionine (AdoMet) from methionine and ATP. The overall synthetic reaction is composed of two sequential steps, AdoMet formation and the subsequent tripolyphosphate hydrolysis which occurs prior to release of AdoMet from the enzyme. This Ralstonia pickettii (strain 12J) protein is S-adenosylmethionine synthase.